A 316-amino-acid chain; its full sequence is Homoserine kinase (316 aa).

Pro97–Ala107 lines the ATP pocket.

Belongs to the GHMP kinase family. Homoserine kinase subfamily.

It is found in the cytoplasm. The catalysed reaction is L-homoserine + ATP = O-phospho-L-homoserine + ADP + H(+). It functions in the pathway amino-acid biosynthesis; L-threonine biosynthesis; L-threonine from L-aspartate: step 4/5. Catalyzes the ATP-dependent phosphorylation of L-homoserine to L-homoserine phosphate. This is Homoserine kinase from Mycobacterium tuberculosis (strain ATCC 25618 / H37Rv).